The primary structure comprises 287 residues: Putative daunorubicin C-13 ketoreductase DnrU (287 aa).

NADP(+) is bound at residue 24-30 (GATSGIG). Substrate is bound at residue Ser149. Residue Tyr175 is the Proton acceptor of the active site.

It belongs to the short-chain dehydrogenases/reductases (SDR) family.

Its function is as follows. Could reduce the 13-carbonyl of daunorubicin to produce (13S)-13-dihydrodaunorubicin. Could also be able to reduce the 13-carbonyl of doxorubicin. This Streptomyces sp. (strain C5) protein is Putative daunorubicin C-13 ketoreductase DnrU.